The following is a 658-amino-acid chain: MPRIAALPDHLVNQIAAGEVVERPANALKEIVENSIDAGATAVDVELEGGGIRLIRVGDNGGGIHPDDIELALHRHATSKIKTLNDLEHVASMGFRGEGLASIASVSRLTLTSRQEDSSHATQVKAEDGKLSSPTAAAHPVGTTIEAAELFFNTPARRKFLKSENTEYAHCATMLERLALAHPHIAFSLKRDGKQVFKLPAQSLHERIAAIVGDDFQTASLEIDSGNSALRLYGAIAKPTFAKGKTDKQYCFVNHRFVRDKVMLHAVKQAYRDVLHNALTPAFVLFLELPPKAVDVNVHPTKTEIRFRDSRQVHQLVFHTLNKALADTRANLTESVSNAGEVLHDITGVTPAPMPSENDSENLFDSASNHPTGNKPDTRNAFGSSGKTAPMPYQAARAPQQHSLSLRESRAAMDTYAELYKKTDDIDLELSQFEQARFGNMPSETPAHKTDTPLSDGIPSQSELPPLGFAIAQLLGIYILAQAEDSLLLIDMHAAAERVNYEKMKRQRQENGNLQSQHLLIPVTFAASHEECAALADHAETLAGFGLELSDMGGNTLAVRAAPVMLGKSDVVSLARDVLGELAQVGSSQTIASHENRILATMSCHGSIRAGRRLTLPEMNALLRDMENTPRSNQCNHGRPTWVKLTLKELDTLFLRGQ.

Over residues 114-130 (RQEDSSHATQVKAEDGK) the composition is skewed to basic and acidic residues. Disordered stretches follow at residues 114 to 138 (RQED…TAAA) and 353 to 405 (PMPS…HSLS). Positions 361 to 372 (ENLFDSASNHPT) are enriched in polar residues.

The protein belongs to the DNA mismatch repair MutL/HexB family.

Its function is as follows. This protein is involved in the repair of mismatches in DNA. It is required for dam-dependent methyl-directed DNA mismatch repair. May act as a 'molecular matchmaker', a protein that promotes the formation of a stable complex between two or more DNA-binding proteins in an ATP-dependent manner without itself being part of a final effector complex. The protein is DNA mismatch repair protein MutL of Neisseria gonorrhoeae (strain NCCP11945).